The sequence spans 313 residues: 2,3-dihydroxyphenylpropionate/2,3-dihydroxicinnamic acid 1,2-dioxygenase (313 aa).

The active-site Proton donor is His116. The active-site Proton acceptor is His180.

The protein belongs to the LigB/MhpB extradiol dioxygenase family. As to quaternary structure, homotetramer. Fe(2+) serves as cofactor.

The enzyme catalyses 3-(2,3-dihydroxyphenyl)propanoate + O2 = (2Z,4E)-2-hydroxy-6-oxonona-2,4-dienedioate + H(+). It catalyses the reaction (2E)-3-(2,3-dihydroxyphenyl)prop-2-enoate + O2 = (2Z,4E,7E)-2-hydroxy-6-oxonona-2,4,7-trienedioate + H(+). Its pathway is aromatic compound metabolism; 3-phenylpropanoate degradation. Functionally, catalyzes the non-heme iron(II)-dependent oxidative cleavage of 2,3-dihydroxyphenylpropionic acid and 2,3-dihydroxicinnamic acid into 2-hydroxy-6-ketononadienedioate and 2-hydroxy-6-ketononatrienedioate, respectively. This chain is 2,3-dihydroxyphenylpropionate/2,3-dihydroxicinnamic acid 1,2-dioxygenase, found in Mycobacterium sp. (strain MCS).